We begin with the raw amino-acid sequence, 347 residues long: Glycerol-1-phosphate dehydrogenase [NAD(P)+] (347 aa).

Residues 94 to 98 (GKVID) and 116 to 119 (TAAS) each bind NAD(+). D121 is a substrate binding site. Position 125 (S125) interacts with NAD(+). D168 lines the substrate pocket. Residues D168 and H248 each contribute to the Zn(2+) site. H252 is a substrate binding site. Position 264 (H264) interacts with Zn(2+).

This sequence belongs to the glycerol-1-phosphate dehydrogenase family. In terms of assembly, homooctamer. Zn(2+) serves as cofactor.

The protein resides in the cytoplasm. It carries out the reaction sn-glycerol 1-phosphate + NAD(+) = dihydroxyacetone phosphate + NADH + H(+). It catalyses the reaction sn-glycerol 1-phosphate + NADP(+) = dihydroxyacetone phosphate + NADPH + H(+). It functions in the pathway membrane lipid metabolism; glycerophospholipid metabolism. Its activity is regulated as follows. Partially inhibited by divalent metal cations such as Co(2+), Cu(2+) and Ni(2+). Its function is as follows. Catalyzes the NAD(P)H-dependent reduction of dihydroxyacetonephosphate (DHAP or glycerone phosphate) to glycerol 1-phosphate (G1P). The G1P thus generated is used as the glycerophosphate backbone of phospholipids in the cellular membranes of Archaea. Is also able to catalyze the reverse reaction, i.e. the NAD(P)(+)-dependent oxidation of G1P but not of G3P. Is not active toward glycerol, dihydroxyacetone, glyceraldehyde-3-phosphate, glyceraldehyde and glycerol-2-phosphate. The chain is Glycerol-1-phosphate dehydrogenase [NAD(P)+] (egsA) from Methanothermobacter thermautotrophicus (strain ATCC 29096 / DSM 1053 / JCM 10044 / NBRC 100330 / Delta H) (Methanobacterium thermoautotrophicum).